Reading from the N-terminus, the 287-residue chain is Bifunctional protein FolD 1 (287 aa).

Residues 170 to 172 (GRS) and S195 each bind NADP(+).

It belongs to the tetrahydrofolate dehydrogenase/cyclohydrolase family. In terms of assembly, homodimer.

It catalyses the reaction (6R)-5,10-methylene-5,6,7,8-tetrahydrofolate + NADP(+) = (6R)-5,10-methenyltetrahydrofolate + NADPH. It carries out the reaction (6R)-5,10-methenyltetrahydrofolate + H2O = (6R)-10-formyltetrahydrofolate + H(+). The protein operates within one-carbon metabolism; tetrahydrofolate interconversion. Functionally, catalyzes the oxidation of 5,10-methylenetetrahydrofolate to 5,10-methenyltetrahydrofolate and then the hydrolysis of 5,10-methenyltetrahydrofolate to 10-formyltetrahydrofolate. This Streptomyces avermitilis (strain ATCC 31267 / DSM 46492 / JCM 5070 / NBRC 14893 / NCIMB 12804 / NRRL 8165 / MA-4680) protein is Bifunctional protein FolD 1.